The following is a 492-amino-acid chain: Putative BTB/POZ domain and WD-repeat protein R786 (492 aa).

One can recognise a BTB domain in the interval Thr-16–Asn-86. WD repeat units lie at residues Gln-241–Lys-281 and Leu-286–Ile-325.

Belongs to the mimivirus BTB/WD family.

The protein is Putative BTB/POZ domain and WD-repeat protein R786 of Acanthamoeba polyphaga (Amoeba).